We begin with the raw amino-acid sequence, 491 residues long: Cobyric acid synthase (491 aa).

The region spanning 258–445 (ALKVAVPVLG…MHGLFGADAF (188 aa)) is the GATase cobBQ-type domain. C340 serves as the catalytic Nucleophile. The active site involves H437.

Belongs to the CobB/CobQ family. CobQ subfamily.

Its pathway is cofactor biosynthesis; adenosylcobalamin biosynthesis. Catalyzes amidations at positions B, D, E, and G on adenosylcobyrinic A,C-diamide. NH(2) groups are provided by glutamine, and one molecule of ATP is hydrogenolyzed for each amidation. The polypeptide is Cobyric acid synthase (Mesorhizobium japonicum (strain LMG 29417 / CECT 9101 / MAFF 303099) (Mesorhizobium loti (strain MAFF 303099))).